The chain runs to 780 residues: Dynamin-related protein 3B (780 aa).

Position 2 is an N-acetylserine (serine 2). Residues 40–315 form the Dynamin-type G domain; sequence TIALPQVAVV…LVQHIKALLP (276 aa). The tract at residues 50–57 is G1 motif; sequence GSQSSGKS. Residue 50–57 coordinates GTP; the sequence is GSQSSGKS. Residues 76-78 form a G2 motif region; it reads CTR. Residues 157 to 160 are G3 motif; that stretch reads DLPG. GTP contacts are provided by residues 157–161 and 226–229; these read DLPGI and TKLD. A G4 motif region spans residues 226–229; that stretch reads TKLD. The tract at residues 256-259 is G5 motif; sequence VNRS. Disordered stretches follow at residues 536–558 and 573–592; these read PVAR…QIKT and QAVP…STSW. Residues 539–548 show a composition bias toward basic and acidic residues; that stretch reads RPRDTVEPER. The segment covering 549–558 has biased composition (polar residues); the sequence is TASSGSQIKT. Residues 654-745 enclose the GED domain; sequence IEITKLLLKS…TLDELPLEAE (92 aa). The span at 753-770 shows a compositional bias: basic and acidic residues; that stretch reads IGSEAKHEELPGTRRSRT. A disordered region spans residues 753–780; it reads IGSEAKHEELPGTRRSRTETNGNGRLHM. Residues 771-780 are compositionally biased toward polar residues; it reads ETNGNGRLHM.

It belongs to the TRAFAC class dynamin-like GTPase superfamily. Dynamin/Fzo/YdjA family. Interacts with ARC5 on peroxisomes and ELM1 on mitochondria.

It localises to the mitochondrion. Its subcellular location is the peroxisome. In terms of biological role, involved in the control of mitochondrial and peroxisomal division and morphology. In Arabidopsis thaliana (Mouse-ear cress), this protein is Dynamin-related protein 3B (DRP3B).